Consider the following 48-residue polypeptide: ATP synthase protein 8 (48 aa).

A helical membrane pass occupies residues 13-32; sequence VVFTLISLSFIFFVFSKYIL.

Belongs to the ATPase protein 8 family. In terms of assembly, F-type ATPases have 2 components, CF(1) - the catalytic core - and CF(0) - the membrane proton channel.

The protein localises to the mitochondrion membrane. Functionally, mitochondrial membrane ATP synthase (F(1)F(0) ATP synthase or Complex V) produces ATP from ADP in the presence of a proton gradient across the membrane which is generated by electron transport complexes of the respiratory chain. F-type ATPases consist of two structural domains, F(1) - containing the extramembraneous catalytic core and F(0) - containing the membrane proton channel, linked together by a central stalk and a peripheral stalk. During catalysis, ATP synthesis in the catalytic domain of F(1) is coupled via a rotary mechanism of the central stalk subunits to proton translocation. Part of the complex F(0) domain. Minor subunit located with subunit a in the membrane. In Trichophyton rubrum (Athlete's foot fungus), this protein is ATP synthase protein 8 (ATP8).